Consider the following 103-residue polypeptide: Phosphoribosyl-ATP pyrophosphatase (103 aa).

Belongs to the PRA-PH family.

The protein resides in the cytoplasm. It catalyses the reaction 1-(5-phospho-beta-D-ribosyl)-ATP + H2O = 1-(5-phospho-beta-D-ribosyl)-5'-AMP + diphosphate + H(+). It participates in amino-acid biosynthesis; L-histidine biosynthesis; L-histidine from 5-phospho-alpha-D-ribose 1-diphosphate: step 2/9. The sequence is that of Phosphoribosyl-ATP pyrophosphatase from Listeria monocytogenes serotype 4a (strain HCC23).